The primary structure comprises 698 residues: Elongation factor G (698 aa).

The tr-type G domain maps to 10–285; the sequence is DKTRNIGIMA…AVVDYLPSPL (276 aa). Residues 19–26, 83–87, and 137–140 contribute to the GTP site; these read AHIDAGKT, DTPGH, and NKMD.

The protein belongs to the TRAFAC class translation factor GTPase superfamily. Classic translation factor GTPase family. EF-G/EF-2 subfamily.

It localises to the cytoplasm. Functionally, catalyzes the GTP-dependent ribosomal translocation step during translation elongation. During this step, the ribosome changes from the pre-translocational (PRE) to the post-translocational (POST) state as the newly formed A-site-bound peptidyl-tRNA and P-site-bound deacylated tRNA move to the P and E sites, respectively. Catalyzes the coordinated movement of the two tRNA molecules, the mRNA and conformational changes in the ribosome. In Lactiplantibacillus plantarum (strain ATCC BAA-793 / NCIMB 8826 / WCFS1) (Lactobacillus plantarum), this protein is Elongation factor G.